The chain runs to 67 residues: Inosine/xanthosine triphosphatase (67 aa).

This sequence belongs to the YjjX NTPase family. Homodimer. It depends on Mg(2+) as a cofactor. Mn(2+) serves as cofactor.

It catalyses the reaction XTP + H2O = XDP + phosphate + H(+). The catalysed reaction is ITP + H2O = IDP + phosphate + H(+). Functionally, phosphatase that hydrolyzes non-canonical purine nucleotides such as XTP and ITP to their respective diphosphate derivatives. Probably excludes non-canonical purines from DNA/RNA precursor pool, thus preventing their incorporation into DNA/RNA and avoiding chromosomal lesions. In Enterobacter cloacae, this protein is Inosine/xanthosine triphosphatase.